The sequence spans 422 residues: UDP-N-acetylglucosamine 1-carboxyvinyltransferase (422 aa).

Phosphoenolpyruvate is bound at residue 22–23 (KN). Arg93 lines the UDP-N-acetyl-alpha-D-glucosamine pocket. Residue Cys117 is the Proton donor of the active site. Residue Cys117 is modified to 2-(S-cysteinyl)pyruvic acid O-phosphothioketal. Residues 122 to 126 (RPVDQ), Asp305, and Ile327 contribute to the UDP-N-acetyl-alpha-D-glucosamine site.

The protein belongs to the EPSP synthase family. MurA subfamily.

The protein resides in the cytoplasm. The catalysed reaction is phosphoenolpyruvate + UDP-N-acetyl-alpha-D-glucosamine = UDP-N-acetyl-3-O-(1-carboxyvinyl)-alpha-D-glucosamine + phosphate. It functions in the pathway cell wall biogenesis; peptidoglycan biosynthesis. Functionally, cell wall formation. Adds enolpyruvyl to UDP-N-acetylglucosamine. The polypeptide is UDP-N-acetylglucosamine 1-carboxyvinyltransferase (Bordetella bronchiseptica (strain ATCC BAA-588 / NCTC 13252 / RB50) (Alcaligenes bronchisepticus)).